A 237-amino-acid polypeptide reads, in one-letter code: ATP synthase subunit a (237 aa).

A run of 6 helical transmembrane segments spans residues 18 to 38 (STLWMAIGVLMIALLMVVGTL), 77 to 97 (IFTLFLFILFSNFLGLIPMAF), 103 to 123 (IAVTGVMAMGVFIGVTALGFM), 132 to 152 (LFWVSAAPLPLRPILAVIEVI), 185 to 205 (LILFSFVGVIVTPLSVLAIVA), and 209 to 229 (LEILVAFVQAYVFTILTCVYL).

The protein belongs to the ATPase A chain family. In terms of assembly, F-type ATPases have 2 components, CF(1) - the catalytic core - and CF(0) - the membrane proton channel. CF(1) has five subunits: alpha(3), beta(3), gamma(1), delta(1), epsilon(1). CF(0) has three main subunits: a(1), b(2) and c(9-12). The alpha and beta chains form an alternating ring which encloses part of the gamma chain. CF(1) is attached to CF(0) by a central stalk formed by the gamma and epsilon chains, while a peripheral stalk is formed by the delta and b chains.

It is found in the cellular chromatophore membrane. Its function is as follows. Key component of the proton channel; it plays a direct role in the translocation of protons across the membrane. The chain is ATP synthase subunit a from Rhodobacter capsulatus (Rhodopseudomonas capsulata).